A 712-amino-acid chain; its full sequence is Cyclomaltodextrin glucanotransferase (712 aa).

A signal peptide spans 1–27 (MKRFMKLTAVWTLWLSLTLGLLSPVHA). The A1 stretch occupies residues 28 to 165 (APDTSVSNKQ…NIKVIIDFAP (138 aa)). Residues Asp-54, Asn-56, Asn-59, and Asn-60 each coordinate Ca(2+). Cys-70 and Cys-77 are joined by a disulfide. Ca(2+) contacts are provided by Gly-78 and Asp-80. 127-128 (YW) contributes to the substrate binding site. Asn-166 contacts Ca(2+). The segment at 166–229 (NHTSPASSDD…NLYDLADLNH (64 aa)) is b. His-167 serves as a coordination point for substrate. A Ca(2+)-binding site is contributed by Ile-217. 220–223 (NLYD) serves as a coordination point for substrate. Ca(2+) is bound at residue Asp-226. Residues 230 to 433 (NNSSVDVYLK…LRKSNPAIAY (204 aa)) are A2. Residue Arg-254 coordinates substrate. Asp-256 serves as the catalytic Nucleophile. Substrate is bound at residue 259 to 260 (KH). A Ca(2+)-binding site is contributed by His-260. Residue Glu-284 is the Proton donor of the active site. Residues His-354, Asp-398, and Arg-402 each coordinate substrate. Residues 434-522 (GSTQERWINN…GTAVWQYTTD (89 aa)) form a c region. Residues 523–608 (ATAPINGNVG…SNIYDNFEVL (86 aa)) are d. One can recognise an IPT/TIG domain in the interval 526–606 (PINGNVGPMM…AASNIYDNFE (81 aa)). The CBM20 domain occupies 607–712 (VLTGDQVTVR…TATVNVNWQP (106 aa)). Residues 609–712 (TGDQVTVRFV…TATVNVNWQP (104 aa)) form an e region.

Belongs to the glycosyl hydrolase 13 family. As to quaternary structure, monomer. Requires Ca(2+) as cofactor.

The protein resides in the secreted. It carries out the reaction Cyclizes part of a (1-&gt;4)-alpha-D-glucan chain by formation of a (1-&gt;4)-alpha-D-glucosidic bond.. The protein is Cyclomaltodextrin glucanotransferase (cgt) of Bacillus sp. (strain 38-2).